The chain runs to 311 residues: Dehydrogenase/reductase SDR family member 7C (311 aa).

Positions 1-18 (MGLMAVLMLPLLLLGISG) are cleaved as a signal peptide. NAD(+)-binding residues include serine 47, leucine 49, tyrosine 191, lysine 195, and serine 226. The active-site Proton acceptor is tyrosine 191.

The protein belongs to the short-chain dehydrogenases/reductases (SDR) family. Expressed in skeletal muscle and cardiac muscle. Also expressed in liver, kidney, adipocytes and skin.

It is found in the sarcoplasmic reticulum membrane. The enzyme catalyses all-trans-retinol + NAD(+) = all-trans-retinal + NADH + H(+). NADH-dependent oxidoreductase which catalyzes the oxidation of all-trans-retinol to all-trans-retinal. Plays a role in the regulation of cardiac and skeletal muscle metabolic functions. Maintains Ca(2+) intracellular homeostasis by repressing Ca(2+) release from the sarcoplasmic reticulum (SR) in myotubes, possibly through local alternations in NAD/NADH or retinol/retinal. Also plays a role in Ca(2+) homeostasis by controlling Ca(2+) overload in the cytosol and the SR in myotubes. Involved in glucose uptake into skeletal muscles and muscle performance by activating PI3K and mTORC2-mediated AKT1 phosphorylation signaling pathways, possibly through the action of its downstream catalytic product all-trans-retinoic acid. This Mus musculus (Mouse) protein is Dehydrogenase/reductase SDR family member 7C.